Reading from the N-terminus, the 181-residue chain is Shikimate kinase (181 aa).

Residue Gly-11–Lys-16 coordinates ATP. Residue Ser-15 participates in Mg(2+) binding. Substrate is bound by residues Asp-33, Arg-58, and Gly-80. Residue Arg-128 coordinates ATP. Arg-144 contributes to the substrate binding site.

It belongs to the shikimate kinase family. In terms of assembly, monomer. It depends on Mg(2+) as a cofactor.

Its subcellular location is the cytoplasm. The enzyme catalyses shikimate + ATP = 3-phosphoshikimate + ADP + H(+). It functions in the pathway metabolic intermediate biosynthesis; chorismate biosynthesis; chorismate from D-erythrose 4-phosphate and phosphoenolpyruvate: step 5/7. Catalyzes the specific phosphorylation of the 3-hydroxyl group of shikimic acid using ATP as a cosubstrate. This is Shikimate kinase from Leptospira biflexa serovar Patoc (strain Patoc 1 / Ames).